A 1079-amino-acid polypeptide reads, in one-letter code: Integrator complex subunit 3 homolog (1079 aa).

Disordered stretches follow at residues 544 to 574 (ETEAVFSDEDGENLGRCTKNEENTDDDDDLP), 925 to 949 (YPSSSPNKRKRPSKGSSAASSTPSA), and 1010 to 1079 (AVGR…NDSD). Residues 938–949 (KGSSAASSTPSA) show a composition bias toward low complexity. Ser1049, Ser1050, Ser1054, and Ser1055 each carry phosphoserine. The span at 1062–1073 (HKITQAAKKRKK) shows a compositional bias: basic residues.

Belongs to the Integrator subunit 3 family. As to quaternary structure, belongs to the multiprotein complex Integrator, at least composed of IntS1, IntS2, IntS3, IntS4, omd/IntS5, IntS6, defl/IntS7, IntS8, IntS9, IntS10, IntS11, IntS12, asun/IntS13, IntS14 and IntS15. The core complex associates with protein phosphatase 2A subunits mts/PP2A and Pp2A-29B, to form the Integrator-PP2A (INTAC) complex.

It is found in the nucleus. The protein resides in the cytoplasm. Component of the integrator complex, a multiprotein complex that terminates RNA polymerase II (Pol II) transcription in the promoter-proximal region of genes. The integrator complex provides a quality checkpoint during transcription elongation by driving premature transcription termination of transcripts that are unfavorably configured for transcriptional elongation: the complex terminates transcription by (1) catalyzing dephosphorylation of the C-terminal domain (CTD) of Pol II subunit Polr2A/Rbp1 and Spt5, and (2) degrading the exiting nascent RNA transcript via endonuclease activity. The integrator complex is also involved in the 3'-end processing of the U7 snRNA, and also the spliceosomal snRNAs U1, U2, U4 and U5. The chain is Integrator complex subunit 3 homolog (IntS3) from Drosophila mojavensis (Fruit fly).